A 326-amino-acid chain; its full sequence is Holliday junction branch migration complex subunit RuvB (326 aa).

Residues 1-180 (MKSISCGKEY…FGIPLHLEFY (180 aa)) are large ATPase domain (RuvB-L). ATP contacts are provided by residues isoleucine 19, arginine 20, glycine 61, lysine 64, threonine 65, threonine 66, 127 to 129 (EDF), arginine 170, tyrosine 180, and arginine 217. Threonine 65 contributes to the Mg(2+) binding site. The interval 181–251 (SFEELVNIIK…VADSVLLKLG (71 aa)) is small ATPAse domain (RuvB-S). Positions 254–326 (KMGLNKLDMN…QAKEYLSFQH (73 aa)) are head domain (RuvB-H). DNA is bound by residues arginine 307 and arginine 312.

Belongs to the RuvB family. In terms of assembly, homohexamer. Forms an RuvA(8)-RuvB(12)-Holliday junction (HJ) complex. HJ DNA is sandwiched between 2 RuvA tetramers; dsDNA enters through RuvA and exits via RuvB. An RuvB hexamer assembles on each DNA strand where it exits the tetramer. Each RuvB hexamer is contacted by two RuvA subunits (via domain III) on 2 adjacent RuvB subunits; this complex drives branch migration. In the full resolvosome a probable DNA-RuvA(4)-RuvB(12)-RuvC(2) complex forms which resolves the HJ.

It is found in the cytoplasm. The catalysed reaction is ATP + H2O = ADP + phosphate + H(+). Functionally, the RuvA-RuvB-RuvC complex processes Holliday junction (HJ) DNA during genetic recombination and DNA repair, while the RuvA-RuvB complex plays an important role in the rescue of blocked DNA replication forks via replication fork reversal (RFR). RuvA specifically binds to HJ cruciform DNA, conferring on it an open structure. The RuvB hexamer acts as an ATP-dependent pump, pulling dsDNA into and through the RuvAB complex. RuvB forms 2 homohexamers on either side of HJ DNA bound by 1 or 2 RuvA tetramers; 4 subunits per hexamer contact DNA at a time. Coordinated motions by a converter formed by DNA-disengaged RuvB subunits stimulates ATP hydrolysis and nucleotide exchange. Immobilization of the converter enables RuvB to convert the ATP-contained energy into a lever motion, pulling 2 nucleotides of DNA out of the RuvA tetramer per ATP hydrolyzed, thus driving DNA branch migration. The RuvB motors rotate together with the DNA substrate, which together with the progressing nucleotide cycle form the mechanistic basis for DNA recombination by continuous HJ branch migration. Branch migration allows RuvC to scan DNA until it finds its consensus sequence, where it cleaves and resolves cruciform DNA. This Wolbachia pipientis wMel protein is Holliday junction branch migration complex subunit RuvB.